A 363-amino-acid polypeptide reads, in one-letter code: Cobalt-precorrin-5B C(1)-methyltransferase (363 aa).

It belongs to the CbiD family.

The enzyme catalyses Co-precorrin-5B + S-adenosyl-L-methionine = Co-precorrin-6A + S-adenosyl-L-homocysteine. The protein operates within cofactor biosynthesis; adenosylcobalamin biosynthesis; cob(II)yrinate a,c-diamide from sirohydrochlorin (anaerobic route): step 6/10. In terms of biological role, catalyzes the methylation of C-1 in cobalt-precorrin-5B to form cobalt-precorrin-6A. In Burkholderia pseudomallei (strain K96243), this protein is Cobalt-precorrin-5B C(1)-methyltransferase.